Reading from the N-terminus, the 355-residue chain is Phenylalanine--tRNA ligase alpha subunit (355 aa).

Residue Glu273 participates in Mg(2+) binding.

The protein belongs to the class-II aminoacyl-tRNA synthetase family. Phe-tRNA synthetase alpha subunit type 1 subfamily. In terms of assembly, tetramer of two alpha and two beta subunits. Mg(2+) is required as a cofactor.

It localises to the cytoplasm. The enzyme catalyses tRNA(Phe) + L-phenylalanine + ATP = L-phenylalanyl-tRNA(Phe) + AMP + diphosphate + H(+). This chain is Phenylalanine--tRNA ligase alpha subunit, found in Bifidobacterium longum (strain NCC 2705).